A 476-amino-acid chain; its full sequence is Eukaryotic translation initiation factor 3 subunit L (476 aa).

The PCI domain maps to 257–452 (DAIRMFSHIL…DLDYALENDL (196 aa)).

It belongs to the eIF-3 subunit L family. In terms of assembly, component of the eukaryotic translation initiation factor 3 (eIF-3) complex.

The protein localises to the cytoplasm. Component of the eukaryotic translation initiation factor 3 (eIF-3) complex, which is involved in protein synthesis of a specialized repertoire of mRNAs and, together with other initiation factors, stimulates binding of mRNA and methionyl-tRNAi to the 40S ribosome. The eIF-3 complex specifically targets and initiates translation of a subset of mRNAs involved in cell proliferation. The polypeptide is Eukaryotic translation initiation factor 3 subunit L (Aspergillus clavatus (strain ATCC 1007 / CBS 513.65 / DSM 816 / NCTC 3887 / NRRL 1 / QM 1276 / 107)).